The chain runs to 570 residues: Structure-specific endonuclease subunit EME1 (570 aa).

Positions 1-14 (MALRRLSLSRLSTE) are enriched in low complexity. The tract at residues 1 to 86 (MALRRLSLSR…AGPVRVLSSS (86 aa)) is disordered. Ser12 and Ser15 each carry phosphoserine. The segment covering 68–79 (PSAAGAPPQAGP) has biased composition (low complexity). Phosphoserine is present on residues Ser84, Ser85, and Ser87. A Glycyl lysine isopeptide (Lys-Gly) (interchain with G-Cter in SUMO2) cross-link involves residue Lys103. A Phosphoserine modification is found at Ser117. A compositionally biased stretch (polar residues) spans 118-130 (SLKTGLDGQNNAS). Disordered regions lie at residues 118 to 147 (SLKT…PDVP), 185 to 231 (KTNS…ERKK), and 370 to 400 (RPQN…SSTG). Glycyl lysine isopeptide (Lys-Gly) (interchain with G-Cter in SUMO2) cross-links involve residues Lys136 and Lys142. The span at 218 to 231 (SRKENTPRQHERKK) shows a compositional bias: basic and acidic residues. Residues 249–456 (KHIVVVLDPV…PFKKLRDQVT (208 aa)) form a nuclease-like domain; forms the post-nick DNA binding interface and is involved in DNA recognition and bending region. The interval 476–570 (RGLALIWRRQ…QPDLILDSVD (95 aa)) is helix-hairpin-helix (2HhH); forms the pre-nick DNA binding interface and is involved in DNA recognition and bending.

Belongs to the EME1/MMS4 family. Part of the heterodimeric MUS81-EME1 complex. In terms of tissue distribution, weakly expressed in brain, heart, kidney, liver, lung, muscle, skin, small intestine, spleen, stomach, testis and thymus. Expressed in bone marrow. Also expressed in embryonic stem cells (ES cells).

The protein resides in the nucleus. Its subcellular location is the nucleolus. In terms of biological role, non-catalytic subunit of the structure-specific, heterodimeric DNA endonuclease MUS81-EME1 which is involved in the maintenance of genome stability. In the complex, EME1 is required for DNA cleavage, participating in DNA recognition and bending. MUS81-EME1 cleaves 3'-flaps and nicked Holliday junctions, and exhibit limited endonuclease activity with 5' flaps and nicked double-stranded DNAs. Active during prometaphase, MUS81-EME1 resolves mitotic recombination intermediates, including Holliday junctions, which form during homologous recombination. This Mus musculus (Mouse) protein is Structure-specific endonuclease subunit EME1.